A 272-amino-acid polypeptide reads, in one-letter code: Tryptophan synthase alpha chain (272 aa).

Active-site proton acceptor residues include Glu49 and Asp60.

It belongs to the TrpA family. Tetramer of two alpha and two beta chains.

The enzyme catalyses (1S,2R)-1-C-(indol-3-yl)glycerol 3-phosphate + L-serine = D-glyceraldehyde 3-phosphate + L-tryptophan + H2O. Its pathway is amino-acid biosynthesis; L-tryptophan biosynthesis; L-tryptophan from chorismate: step 5/5. Its function is as follows. The alpha subunit is responsible for the aldol cleavage of indoleglycerol phosphate to indole and glyceraldehyde 3-phosphate. The polypeptide is Tryptophan synthase alpha chain (Methylibium petroleiphilum (strain ATCC BAA-1232 / LMG 22953 / PM1)).